The primary structure comprises 275 residues: Anamorsin homolog (275 aa).

Residues 1–147 (MTSASIHIGS…QSASSAAATG (147 aa)) form an N-terminal SAM-like domain region. The linker stretch occupies residues 148 to 183 (RINLGGAKTKVKLSLDDDDDDQLIDEDDLLNGGGGM). [2Fe-2S] cluster is bound by residues C203, C209, C212, and C214. The segment at 203–214 (CGGRKACDNCTC) is fe-S binding site A. C238, C241, C249, and C252 together coordinate [4Fe-4S] cluster. 2 short sequence motifs (cx2C motif) span residues 238 to 241 (CGNC) and 249 to 252 (CAGC). The segment at 238–252 (CGNCAKGDAFRCAGC) is fe-S binding site B.

Belongs to the anamorsin family. In terms of assembly, monomer. [2Fe-2S] cluster serves as cofactor. [4Fe-4S] cluster is required as a cofactor.

It localises to the cytoplasm. The protein localises to the mitochondrion intermembrane space. In terms of biological role, component of the cytosolic iron-sulfur (Fe-S) protein assembly (CIA) machinery. Required for the maturation of extramitochondrial Fe-S proteins. Part of an electron transfer chain functioning in an early step of cytosolic Fe-S biogenesis, facilitating the de novo assembly of a [4Fe-4S] cluster on the cytosolic Fe-S scaffold complex. Electrons are transferred from NADPH via a FAD- and FMN-containing diflavin oxidoreductase. Together with the diflavin oxidoreductase, also required for the assembly of the diferric tyrosyl radical cofactor of ribonucleotide reductase (RNR), probably by providing electrons for reduction during radical cofactor maturation in the catalytic small subunit. This chain is Anamorsin homolog, found in Thalassiosira pseudonana (Marine diatom).